Reading from the N-terminus, the 90-residue chain is Putative large ribosomal subunit protein uL23c (90 aa).

A coded by first part of gene region spans residues 1–46 (MDGIKYAVFTDKSIQLLGKKQYTSNVESRSTRTEIKHWVELWNSYE). Residues 47 to 90 (MNSHRLPGKGRRMGPIMGHTMHYRRMIITLQSSYSIPPLRKKRT) form a coded by second part of gene region.

This sequence belongs to the universal ribosomal protein uL23 family. As to quaternary structure, part of the 50S ribosomal subunit.

It is found in the plastid. The protein resides in the chloroplast. In terms of biological role, binds to 23S rRNA. This chain is Putative large ribosomal subunit protein uL23c (rpl23), found in Spinacia oleracea (Spinach).